The sequence spans 293 residues: 4-diphosphocytidyl-2-C-methyl-D-erythritol kinase (293 aa).

The active site involves Lys16. Pro99–Ser109 is a binding site for ATP. Asp141 is a catalytic residue.

Belongs to the GHMP kinase family. IspE subfamily.

The catalysed reaction is 4-CDP-2-C-methyl-D-erythritol + ATP = 4-CDP-2-C-methyl-D-erythritol 2-phosphate + ADP + H(+). It participates in isoprenoid biosynthesis; isopentenyl diphosphate biosynthesis via DXP pathway; isopentenyl diphosphate from 1-deoxy-D-xylulose 5-phosphate: step 3/6. Functionally, catalyzes the phosphorylation of the position 2 hydroxy group of 4-diphosphocytidyl-2C-methyl-D-erythritol. This chain is 4-diphosphocytidyl-2-C-methyl-D-erythritol kinase, found in Burkholderia multivorans (strain ATCC 17616 / 249).